The sequence spans 349 residues: Sterol-4-alpha-carboxylate 3-dehydrogenase ERG26, decarboxylating (349 aa).

Residues 11-17, 62-63, and 84-86 contribute to the NADP(+) site; these read GGSGFLG, DL, and CAS. Positions 124 and 151 each coordinate substrate. Residues Y151, K155, and 179 to 182 contribute to the NADP(+) site; that span reads PAGI. K155 acts as the Proton donor in catalysis.

It belongs to the 3-beta-HSD family. Heterotetramer of ERG25, ERG26, ERG27 and ERG28. ERG28 acts as a scaffold to tether ERG27 and other 4,4-demethylation-related enzymes, forming a demethylation enzyme complex, in the endoplasmic reticulum.

Its subcellular location is the endoplasmic reticulum membrane. It carries out the reaction 4beta-methylzymosterol-4alpha-carboxylate + NADP(+) = 3-dehydro-4-methylzymosterol + CO2 + NADPH. It functions in the pathway steroid biosynthesis; zymosterol biosynthesis; zymosterol from lanosterol: step 4/6. With respect to regulation, inhibited by FR171456, a natural product with broad antifungal activity. In terms of biological role, sterol-4-alpha-carboxylate 3-dehydrogenase; part of the third module of ergosterol biosynthesis pathway that includes the late steps of the pathway. ERG26 is a catalytic component of the C-4 demethylation complex that catalyzes the oxidative decarboxylation that results in a reduction of the 3-beta-hydroxy group at the C-3 carbon to an oxo group. The third module or late pathway involves the ergosterol synthesis itself through consecutive reactions that mainly occur in the endoplasmic reticulum (ER) membrane. Firstly, the squalene synthase ERG9 catalyzes the condensation of 2 farnesyl pyrophosphate moieties to form squalene, which is the precursor of all steroids. Squalene synthase is crucial for balancing the incorporation of farnesyl diphosphate (FPP) into sterol and nonsterol isoprene synthesis. Secondly, the squalene epoxidase ERG1 catalyzes the stereospecific oxidation of squalene to (S)-2,3-epoxysqualene, which is considered to be a rate-limiting enzyme in steroid biosynthesis. Then, the lanosterol synthase ERG7 catalyzes the cyclization of (S)-2,3 oxidosqualene to lanosterol, a reaction that forms the sterol core. In the next steps, lanosterol is transformed to zymosterol through a complex process involving various demethylation, reduction and desaturation reactions. The lanosterol 14-alpha-demethylase ERG11 (also known as CYP51) catalyzes C14-demethylation of lanosterol to produce 4,4'-dimethyl cholesta-8,14,24-triene-3-beta-ol, which is critical for ergosterol biosynthesis. The C-14 reductase ERG24 reduces the C14=C15 double bond of 4,4-dimethyl-cholesta-8,14,24-trienol to produce 4,4-dimethyl-cholesta-8,24-dienol. 4,4-dimethyl-cholesta-8,24-dienol is substrate of the C-4 demethylation complex ERG25-ERG26-ERG27 in which ERG25 catalyzes the three-step monooxygenation required for the demethylation of 4,4-dimethyl and 4alpha-methylsterols, ERG26 catalyzes the oxidative decarboxylation that results in a reduction of the 3-beta-hydroxy group at the C-3 carbon to an oxo group, and ERG27 is responsible for the reduction of the keto group on the C-3. ERG28 has a role as a scaffold to help anchor ERG25, ERG26 and ERG27 to the endoplasmic reticulum and ERG29 regulates the activity of the iron-containing C4-methylsterol oxidase ERG25. Then, the sterol 24-C-methyltransferase ERG6 catalyzes the methyl transfer from S-adenosyl-methionine to the C-24 of zymosterol to form fecosterol. The C-8 sterol isomerase ERG2 catalyzes the reaction which results in unsaturation at C-7 in the B ring of sterols and thus converts fecosterol to episterol. The sterol-C5-desaturase ERG3 then catalyzes the introduction of a C-5 double bond in the B ring to produce 5-dehydroepisterol. The C-22 sterol desaturase ERG5 further converts 5-dehydroepisterol into ergosta-5,7,22,24(28)-tetraen-3beta-ol by forming the C-22(23) double bond in the sterol side chain. Finally, ergosta-5,7,22,24(28)-tetraen-3beta-ol is substrate of the C-24(28) sterol reductase ERG4 to produce ergosterol. The chain is Sterol-4-alpha-carboxylate 3-dehydrogenase ERG26, decarboxylating from Saccharomyces cerevisiae (strain ATCC 204508 / S288c) (Baker's yeast).